A 249-amino-acid polypeptide reads, in one-letter code: NAD(P)H-quinone oxidoreductase subunit T, chloroplastic (249 aa).

A chloroplast-targeting transit peptide spans 1-45; that stretch reads MAYATSTYARTSCIILPKIQNGAHFTDDTKAFRRITARRVTRIYA. Residues 44–84 form a disordered region; that stretch reads YASQGPTKPSKPSPGVDTRIHWESPDEGWIGGRSDPAKSVD. Residues 106–172 form the J domain; the sequence is SHYQFLGVST…ETRRFYDWTL (67 aa). Residues 224–244 form a helical membrane-spanning segment; that stretch reads LTFDILIVLFAVCCIAFVIVF.

As to quaternary structure, part of the chloroplast NDH complex, composed of a mixture of chloroplast and nucleus encoded subunits. Component of the electron donor-binding subcomplex, at least composed of NDHS, NDHT and NDHU.

The protein localises to the plastid. It localises to the chloroplast thylakoid membrane. The enzyme catalyses a plastoquinone + NADH + (n+1) H(+)(in) = a plastoquinol + NAD(+) + n H(+)(out). The catalysed reaction is a plastoquinone + NADPH + (n+1) H(+)(in) = a plastoquinol + NADP(+) + n H(+)(out). Functionally, NDH shuttles electrons from NAD(P)H:plastoquinone, via FMN and iron-sulfur (Fe-S) centers, to quinones in the photosynthetic chain and possibly in a chloroplast respiratory chain. The immediate electron acceptor for the enzyme in this species is believed to be plastoquinone. Couples the redox reaction to proton translocation, and thus conserves the redox energy in a proton gradient. Required for the accumulation of both the NDH subcomplex A and NDHS. The polypeptide is NAD(P)H-quinone oxidoreductase subunit T, chloroplastic (Arabidopsis thaliana (Mouse-ear cress)).